A 182-amino-acid polypeptide reads, in one-letter code: NADH-quinone oxidoreductase subunit B (182 aa).

Residues Cys46, Cys47, Cys112, and Cys141 each coordinate [4Fe-4S] cluster.

Belongs to the complex I 20 kDa subunit family. As to quaternary structure, NDH-1 is composed of 14 different subunits. Subunits NuoB, C, D, E, F, and G constitute the peripheral sector of the complex. Requires [4Fe-4S] cluster as cofactor.

The protein resides in the cell inner membrane. It catalyses the reaction a quinone + NADH + 5 H(+)(in) = a quinol + NAD(+) + 4 H(+)(out). Functionally, NDH-1 shuttles electrons from NADH, via FMN and iron-sulfur (Fe-S) centers, to quinones in the respiratory chain. The immediate electron acceptor for the enzyme in this species is believed to be a menaquinone. Couples the redox reaction to proton translocation (for every two electrons transferred, four hydrogen ions are translocated across the cytoplasmic membrane), and thus conserves the redox energy in a proton gradient. This Flavobacterium johnsoniae (strain ATCC 17061 / DSM 2064 / JCM 8514 / BCRC 14874 / CCUG 350202 / NBRC 14942 / NCIMB 11054 / UW101) (Cytophaga johnsonae) protein is NADH-quinone oxidoreductase subunit B.